The sequence spans 174 residues: Glutaredoxin-C5, chloroplastic (174 aa).

A chloroplast-targeting transit peptide spans 1–51 (MAVTAFNTLKLVSSSLDPIPSVSCSSYSFSLIYVGSPYKRCLKQSCSVRAM). The residue at position 52 (T52) is an N-acetylthreonine. Position 90 is an S-glutathionyl cysteine; partial (C90). C90 and C93 form a disulfide bridge. The 79-residue stretch at 93–171 (CTEVKTLFKR…LMLAEANGKN (79 aa)) folds into the Glutaredoxin domain. Positions 135, 148, and 149 each coordinate glutathione. C148 is subject to S-glutathionyl cysteine; partial.

It belongs to the glutaredoxin family. CPYC subfamily. As to quaternary structure, monomeric apoprotein and homodimeric holoprotein containing a [2Fe-2S] cluster. No in vitro interactions with SUFE1, BOLA1, BOLA2 or BOLA4. Glutathionylated.

The protein resides in the plastid. It localises to the chloroplast. Its function is as follows. Has a glutathione-disulfide oxidoreductase activity in the presence of NADPH and glutathione reductase. Reduces low molecular weight disulfides and proteins. Can assemble a [2Fe-2S] cluster, but cannot transfer it to an apoferredoxin. This Arabidopsis thaliana (Mouse-ear cress) protein is Glutaredoxin-C5, chloroplastic.